A 532-amino-acid polypeptide reads, in one-letter code: Telomerase Cajal body protein 1 (532 aa).

The segment at 1–53 (MKTSEERLLAPDSLPPDLAPAPVPQGSPAEKNTDFEPVPPPCGGDDQPQLATD) is disordered. A compositionally biased stretch (pro residues) spans 13–25 (SLPPDLAPAPVPQ). Phosphoserine is present on residues S27, S61, and S83. Positions 80-122 (SELSPGIEEQDVSEHASLPGEETNLPELESGEATEGVSEERAE) are disordered. WD repeat units lie at residues 151–190 (RSENFLKGCKWAPDGSCILTNSADNVLRIYNLPPELYSEQ), 206–251 (EGDT…LRAS), 256–297 (NHLD…RDCE), 307–348 (GQSG…ALLG), 349–389 (GHQG…HLLW), and 395–434 (VTTNQRIYFDLDPSGQFLVSGNTSGVVSVWDISGALSDDS). The residue at position 474 (T474) is a Phosphothreonine. Residue S476 is modified to Phosphoserine. Residues 510–532 (DPSSPVDDQDEKGQRRTEAVGMS) are disordered. Basic and acidic residues predominate over residues 520–532 (EKGQRRTEAVGMS).

This sequence belongs to the TCAB1 family. As to quaternary structure, component of the telomerase holoenzyme complex composed of one molecule of TERT, one molecule of WRAP53/TCAB1, two molecules of H/ACA ribonucleoprotein complex subunits DKC1, NOP10, NHP2 and GAR1, and a telomerase RNA template component (TERC). The telomerase holoenzyme complex is associated with TEP1, SMG6/EST1A and POT1. Interacts with the chaperonin-containing T-complex (TRiC) complex; which mediates the folding of WRAP53/TCAB1. Interacts with COIL. Interacts with SMN1. Interacts with RNF8. Interacts with histone H2AX. In terms of processing, phosphorylated at Ser-61 by ATM in response to DNA damage, promoting its interaction with histone H2AX and localization to sites of DNA double-strand breaks.

The protein localises to the nucleus. Its subcellular location is the cajal body. The protein resides in the chromosome. It is found in the telomere. RNA chaperone that plays a key role in telomere maintenance and RNA localization to Cajal bodies. Specifically recognizes and binds the Cajal body box (CAB box) present in both small Cajal body RNAs (scaRNAs) and telomerase RNA template component (TERC). Essential component of the telomerase holoenzyme complex, a ribonucleoprotein complex essential for the replication of chromosome termini that elongates telomeres in most eukaryotes. In the telomerase holoenzyme complex, required to stimulate the catalytic activity of the complex. Acts by specifically binding the CAB box of the TERC RNA and controlling the folding of the CR4/CR5 region of the TERC RNA, a critical step for telomerase activity. In addition, also controls telomerase holoenzyme complex localization to Cajal body. During S phase, required for delivery of TERC to telomeres during S phase and for telomerase activity. In addition to its role in telomere maintenance, also required for Cajal body formation, probably by mediating localization of scaRNAs to Cajal bodies. Also plays a role in DNA repair: phosphorylated by ATM in response to DNA damage and relocalizes to sites of DNA double-strand breaks to promote the repair of DNA double-strand breaks. Acts by recruiting the ubiquitin ligase RNF8 to DNA breaks and promote both homologous recombination (HR) and non-homologous end joining (NHEJ). This Mus musculus (Mouse) protein is Telomerase Cajal body protein 1.